The primary structure comprises 959 residues: DNA translocase FtsK 1 (959 aa).

Transmembrane regions (helical) follow at residues 1 to 21 (MGLG…WRYV), 39 to 59 (IWLA…LTSG), and 83 to 103 (GWTG…PMVF). At 104–959 (GHSWRQLLAR…REVIAPGGGD (856 aa)) the chain is on the cytoplasmic side. Positions 122-427 (PVQADARHDE…AAPPPPAVPA (306 aa)) are disordered. The span at 126–136 (DARHDEADDGL) shows a compositional bias: basic and acidic residues. Composition is skewed to low complexity over residues 220–229 (ATPKAATQAP) and 264–286 (APSA…DAPA). Residues 287-298 (SAPPEPAEPSPP) are compositionally biased toward pro residues. A compositionally biased stretch (acidic residues) spans 333 to 379 (PEPEPEPEAETEVTPEAEAEPEAEPEAEAEPEAEAEAEAEAEAEPEA). The segment covering 380–403 (EAPAPESVAPALQEAEAATAAEAP) has biased composition (low complexity). The region spanning 605–814 (GNPVVTDLAR…FQVSSKIDSR (210 aa)) is the FtsK domain. Position 625–630 (625–630 (GSGKSV)) interacts with ATP.

It belongs to the FtsK/SpoIIIE/SftA family. Homohexamer. Forms a ring that surrounds DNA.

It localises to the cell inner membrane. Functionally, essential cell division protein that coordinates cell division and chromosome segregation. The N-terminus is involved in assembly of the cell-division machinery. The C-terminus functions as a DNA motor that moves dsDNA in an ATP-dependent manner towards the dif recombination site, which is located within the replication terminus region. Translocation stops specifically at Xer-dif sites, where FtsK interacts with the Xer recombinase, allowing activation of chromosome unlinking by recombination. FtsK orienting polar sequences (KOPS) guide the direction of DNA translocation. FtsK can remove proteins from DNA as it translocates, but translocation stops specifically at XerCD-dif site, thereby preventing removal of XerC and XerD from dif. This Ralstonia nicotianae (strain ATCC BAA-1114 / GMI1000) (Ralstonia solanacearum) protein is DNA translocase FtsK 1 (ftsK1).